Consider the following 762-residue polypeptide: Cellulose synthase-like protein H2 (762 aa).

Residues 1 to 15 (MAVVAAAAATGSTTR) show a composition bias toward low complexity. The segment at 1 to 39 (MAVVAAAAATGSTTRSGGGGGEGTRSGRKKPPPPPLQER) is disordered. 2 consecutive transmembrane segments (helical) span residues 47–67 (AWAWRLAGLAVLLLLLALLAL) and 81–101 (GVWRVALVCEAWFAALCALNV). Active-site residues include Asp-180 and Asp-470. 6 helical membrane-spanning segments follow: residues 541-561 (LAYLIVLGWPLRAPFELCYGL), 582-602 (FSVPLALFISYNTYNFMEYMA), 619-639 (IISVSAWTLAFLTVLLKSLGL), 673-693 (LPVFIPVTALAMLNIVAVTVG), 708-728 (APGIGEFMCCGWLVLCFFPFV), and 739-759 (GIPWSVKLKASLLVAMFVTFC).

It belongs to the glycosyltransferase 2 family. Plant cellulose synthase-like H subfamily.

Its subcellular location is the golgi apparatus membrane. Its function is as follows. Thought to be a Golgi-localized beta-glycan synthase that polymerize the backbones of noncellulosic polysaccharides (hemicelluloses) of plant cell wall. The protein is Cellulose synthase-like protein H2 (CSLH2) of Oryza sativa subsp. indica (Rice).